We begin with the raw amino-acid sequence, 51 residues long: Insulin (51 aa).

3 disulfides stabilise this stretch: cysteine 7–cysteine 37, cysteine 19–cysteine 50, and cysteine 36–cysteine 41.

Belongs to the insulin family. As to quaternary structure, heterodimer of a B chain and an A chain linked by two disulfide bonds.

It is found in the secreted. In terms of biological role, insulin decreases blood glucose concentration. It increases cell permeability to monosaccharides, amino acids and fatty acids. It accelerates glycolysis, the pentose phosphate cycle, and glycogen synthesis in liver. The chain is Insulin (INS) from Elephas maximus (Indian elephant).